We begin with the raw amino-acid sequence, 220 residues long: Fructose-6-phosphate aldolase (220 aa).

Lysine 85 functions as the Schiff-base intermediate with substrate in the catalytic mechanism.

This sequence belongs to the transaldolase family. Type 3A subfamily. Homodecamer.

The protein localises to the cytoplasm. The catalysed reaction is beta-D-fructose 6-phosphate = dihydroxyacetone + D-glyceraldehyde 3-phosphate. Catalyzes the reversible formation of fructose 6-phosphate from dihydroxyacetone and D-glyceraldehyde 3-phosphate via an aldolization reaction. The protein is Fructose-6-phosphate aldolase of Klebsiella pneumoniae subsp. pneumoniae (strain ATCC 700721 / MGH 78578).